A 721-amino-acid chain; its full sequence is Ribonucleoside-diphosphate reductase subunit alpha (721 aa).

Residues T168, 184–185, G213, 393–397, and 595–599 each bind substrate; these read SC, NLCSE, and PTGSI. C185 and C422 form a disulfide bridge. N393 acts as the Proton acceptor in catalysis. The Cysteine radical intermediate role is filled by C395. The active-site Proton acceptor is the E397.

Belongs to the ribonucleoside diphosphate reductase large chain family. As to quaternary structure, tetramer of two alpha and two beta subunits.

The catalysed reaction is a 2'-deoxyribonucleoside 5'-diphosphate + [thioredoxin]-disulfide + H2O = a ribonucleoside 5'-diphosphate + [thioredoxin]-dithiol. With respect to regulation, under complex allosteric control mediated by deoxynucleoside triphosphates and ATP binding. The type of nucleotide bound at the specificity site determines substrate preference. It seems probable that ATP makes the enzyme reduce CDP and UDP, dGTP favors ADP reduction and dTTP favors GDP reduction. In terms of biological role, provides the precursors necessary for DNA synthesis. Catalyzes the biosynthesis of deoxyribonucleotides from the corresponding ribonucleotides. In Mycobacterium leprae (strain TN), this protein is Ribonucleoside-diphosphate reductase subunit alpha (nrdE).